The sequence spans 286 residues: 33 kDa chaperonin (286 aa).

2 disulfide bridges follow: C225–C227 and C258–C261.

The protein belongs to the HSP33 family. In terms of processing, under oxidizing conditions two disulfide bonds are formed involving the reactive cysteines. Under reducing conditions zinc is bound to the reactive cysteines and the protein is inactive.

It localises to the cytoplasm. Redox regulated molecular chaperone. Protects both thermally unfolding and oxidatively damaged proteins from irreversible aggregation. Plays an important role in the bacterial defense system toward oxidative stress. This chain is 33 kDa chaperonin, found in Shewanella baltica (strain OS223).